A 318-amino-acid polypeptide reads, in one-letter code: Ankyrin repeat domain-containing protein 1 (318 aa).

Residues 37 to 77 are a coiled coil; that stretch reads ALEKQEDLKTTSKSLIELEEEKQSKEKQLKSELLKKKLEER. ANK repeat units lie at residues 151–180, 184–213, 217–246, 250–279, and 283–314; these read YKRTALHRACSEGHTAIVEKLIEAGANIEF, LESTALHWTCRGGSVETLKLLLNKGAAINA, LLSTPLHVAVRTGYYECGEHLIACEADLNA, EGDTPMHDGVRLNRYKMIRLLILYGVNLNI, and AGKTPMELVMQWQNGAKEIFNGLQNKSYKNSH.

It localises to the nucleus. In terms of biological role, may act as a nuclear transcription factor that negatively regulates the expression of cardiac genes. This Xenopus laevis (African clawed frog) protein is Ankyrin repeat domain-containing protein 1 (ankrd1).